The primary structure comprises 396 residues: Anaerobic glycerol-3-phosphate dehydrogenase subunit C (396 aa).

4Fe-4S ferredoxin-type domains are found at residues 2 to 29 (NDTSFENCIKCTVCTTACPVSRVNPGYP) and 45 to 76 (DGALYDEALKYCINCKRCEVACPSDVKIGDII). Positions 9, 12, 15, 19, 56, 59, 62, and 66 each coordinate [4Fe-4S] cluster.

As to quaternary structure, composed of a catalytic GlpA/B dimer and of GlpC.

The protein localises to the cell inner membrane. It participates in polyol metabolism; glycerol degradation via glycerol kinase pathway; glycerone phosphate from sn-glycerol 3-phosphate (anaerobic route): step 1/1. Functionally, electron transfer protein; may also function as the membrane anchor for the GlpAB dimer. The polypeptide is Anaerobic glycerol-3-phosphate dehydrogenase subunit C (glpC) (Escherichia coli O157:H7).